The primary structure comprises 230 residues: MILTTARLNCRPVTVPRLFNRSFSQSFIILKKKSSTPTEKVEEDEIDVNELLKKAETQFKKTLEIQKQKMNEIKQGNFNPKVFNSLVFKNNRKFTDIATTSLKGKNALLITVFDPKDVKTVISGVLAANLNLTPERVPNNDLQLKVSLPPPTTESRLKVAKDLKRVFEEYKQSSLKDSLGTIRGSILKEFKSFKKDDAVRKAERDLEKLHKDYVNKLHDQFQKVEKSIVK.

The N-terminal 24 residues, 1 to 24 (MILTTARLNCRPVTVPRLFNRSFS), are a transit peptide targeting the mitochondrion.

The protein belongs to the RRF family.

Its subcellular location is the mitochondrion. Its function is as follows. Necessary for protein synthesis in mitochondria. Functions as a ribosome recycling factor in mitochondria. The sequence is that of Ribosome-recycling factor, mitochondrial (RRF1) from Saccharomyces cerevisiae (strain ATCC 204508 / S288c) (Baker's yeast).